Reading from the N-terminus, the 90-residue chain is Alpha-latrotoxin associated low molecular weight protein (90 aa).

Positions 1-18 (MNKLFFVVFLCLIISVLA) are cleaved as a signal peptide.

It belongs to the arthropod CHH/MIH/GIH/VIH hormone family. As to expression, expressed by the venom gland.

The protein resides in the secreted. May increase the toxicity of alpha-latrotoxin and/or other venom components. Is non-toxic to mice and to the cockroach Periplaneta americana. The protein is Alpha-latrotoxin associated low molecular weight protein of Latrodectus geometricus (Brown widow spider).